The following is a 373-amino-acid chain: Chorismate synthase (373 aa).

The NADP(+) site is built by R48 and R54. Residues R125 to S127, N248 to A249, G288, K303 to S307, and R329 contribute to the FMN site.

This sequence belongs to the chorismate synthase family. In terms of assembly, homotetramer. The cofactor is FMNH2.

The enzyme catalyses 5-O-(1-carboxyvinyl)-3-phosphoshikimate = chorismate + phosphate. The protein operates within metabolic intermediate biosynthesis; chorismate biosynthesis; chorismate from D-erythrose 4-phosphate and phosphoenolpyruvate: step 7/7. Catalyzes the anti-1,4-elimination of the C-3 phosphate and the C-6 proR hydrogen from 5-enolpyruvylshikimate-3-phosphate (EPSP) to yield chorismate, which is the branch point compound that serves as the starting substrate for the three terminal pathways of aromatic amino acid biosynthesis. This reaction introduces a second double bond into the aromatic ring system. This is Chorismate synthase from Colwellia psychrerythraea (strain 34H / ATCC BAA-681) (Vibrio psychroerythus).